Reading from the N-terminus, the 243-residue chain is 3-deoxy-manno-octulosonate cytidylyltransferase (243 aa).

The protein belongs to the KdsB family.

The protein resides in the cytoplasm. The enzyme catalyses 3-deoxy-alpha-D-manno-oct-2-ulosonate + CTP = CMP-3-deoxy-beta-D-manno-octulosonate + diphosphate. It functions in the pathway nucleotide-sugar biosynthesis; CMP-3-deoxy-D-manno-octulosonate biosynthesis; CMP-3-deoxy-D-manno-octulosonate from 3-deoxy-D-manno-octulosonate and CTP: step 1/1. Its pathway is bacterial outer membrane biogenesis; lipopolysaccharide biosynthesis. Its function is as follows. Activates KDO (a required 8-carbon sugar) for incorporation into bacterial lipopolysaccharide in Gram-negative bacteria. The polypeptide is 3-deoxy-manno-octulosonate cytidylyltransferase (Bartonella henselae (strain ATCC 49882 / DSM 28221 / CCUG 30454 / Houston 1) (Rochalimaea henselae)).